The chain runs to 230 residues: MVKRSKKYREAAERVDRNNLYTANEAIALLKSMPAYNFDQTVEAVFRLSVDPRKADQLVRGTVNLPHGTGKTAKVLVFARGPKATEATEAGADIVGDDDLIAKVQGGFLDFDAVVATPDMMGKVGRLGRVLGPRGLMPNPKTGTVTMDVTKAVKDIKGGKIEFRVDKNGNLSFLIGKMSFDESALDENFKAVADEVKRLKPATVKGRYLTKATITSTMNPGVPVDPNTLA.

Belongs to the universal ribosomal protein uL1 family. In terms of assembly, part of the 50S ribosomal subunit.

Its function is as follows. Binds directly to 23S rRNA. The L1 stalk is quite mobile in the ribosome, and is involved in E site tRNA release. Functionally, protein L1 is also a translational repressor protein, it controls the translation of the L11 operon by binding to its mRNA. The polypeptide is Large ribosomal subunit protein uL1 (Bifidobacterium longum subsp. infantis (strain ATCC 15697 / DSM 20088 / JCM 1222 / NCTC 11817 / S12)).